The following is a 347-amino-acid chain: Palmitoyltransferase ZDHHC11 (347 aa).

Residues 1 to 46 are Cytoplasmic-facing; sequence MKEMNICGINKNWVLPEAQENNVKKFLPRPLSRVNGWSPPLHSFQA. The helical transmembrane segment at 47-67 threads the bilayer; that stretch reads ISWITYLAMSIVTFGIFIPFL. The Lumenal portion of the chain corresponds to 68–75; the sequence is PYSWKYAA. Residues 76-96 traverse the membrane as a helical segment; it reads NIVMGGVFIFHLIVHLIAITI. Residues 97–170 lie on the Cytoplasmic side of the membrane; that stretch reads DPADTNVRLK…LNNCVGRRNY (74 aa). One can recognise a DHHC domain in the interval 128–178; sequence QYCHLCEVTASKKAKHCSACNKCVSGFDHHCKWLNNCVGRRNYWFFFWSVA. Cys-158 (S-palmitoyl cysteine intermediate) is an active-site residue. The chain crosses the membrane as a helical span at residues 171 to 191; sequence WFFFWSVASAAVGILGVMIIL. Residues 192 to 234 are Lumenal-facing; sequence CYICIQYFVNPDELRTDPLYKEIISENTWLLFLSLWPVPVKTP. The helical transmembrane segment at 235–255 threads the bilayer; that stretch reads IVLSIAVMALLLAIASFVMLG. Over 256 to 347 the chain is Cytoplasmic; it reads HLLIFHLYLI…SPPKICHSED (92 aa). Over residues 291–306 the composition is skewed to basic and acidic residues; sequence ELPLQKKGDLPQEKSD. Positions 291–332 are disordered; it reads ELPLQKKGDLPQEKSDNWAWPKSPPRVGSQKFPVSTLSPKSS. Positions 322–331 are enriched in polar residues; it reads FPVSTLSPKS.

This sequence belongs to the DHHC palmitoyltransferase family. As to quaternary structure, interacts with IRF3 and STING1; in presence of DNA viruses recruits IRF3 to STING1 promoting IRF3 phosphorylation and activation.

It is found in the endosome membrane. The enzyme catalyses L-cysteinyl-[protein] + hexadecanoyl-CoA = S-hexadecanoyl-L-cysteinyl-[protein] + CoA. Its function is as follows. Endoplasmic reticulum-localized palmitoyltransferase that could catalyze the addition of palmitate onto various protein substrates and be involved in a variety of cellular processes. Has a palmitoyltransferase activity toward NCDN and regulates NCDN association with endosome membranes through this palmitoylation. May play a role in cell proliferation. Functionally, also has a palmitoyltransferase activity-independent function in DNA virus-triggered and CGAS-mediated innate immune response. Functions as an adapter that recruits IRF3 to STING1 to promote the activation of that key transcriptional regulator of type I interferon (IFN)-dependent immune response. This Mus musculus (Mouse) protein is Palmitoyltransferase ZDHHC11.